A 173-amino-acid polypeptide reads, in one-letter code: Adenine phosphoribosyltransferase (173 aa).

It belongs to the purine/pyrimidine phosphoribosyltransferase family. As to quaternary structure, homodimer.

Its subcellular location is the cytoplasm. The catalysed reaction is AMP + diphosphate = 5-phospho-alpha-D-ribose 1-diphosphate + adenine. Its pathway is purine metabolism; AMP biosynthesis via salvage pathway; AMP from adenine: step 1/1. In terms of biological role, catalyzes a salvage reaction resulting in the formation of AMP, that is energically less costly than de novo synthesis. The sequence is that of Adenine phosphoribosyltransferase from Listeria monocytogenes serotype 4b (strain CLIP80459).